The sequence spans 259 residues: uncharacterized protein (259 aa).

Helical transmembrane passes span 9–31 (ILSV…LESL), 84–106 (LLGG…LQWF), 126–148 (FLIY…FVFG), 153–175 (SIVA…LEYV), 196–215 (HFIL…YIAA), and 230–252 (TFRA…SWLG).

The protein localises to the cell membrane. This is an uncharacterized protein from Archaeoglobus fulgidus (strain ATCC 49558 / DSM 4304 / JCM 9628 / NBRC 100126 / VC-16).